Consider the following 491-residue polypeptide: Cytosolic Fe-S cluster assembly factor NAR1 (491 aa).

Cysteine 20, cysteine 65, cysteine 68, cysteine 71, cysteine 177, cysteine 232, cysteine 414, and cysteine 418 together coordinate [4Fe-4S] cluster.

It belongs to the NARF family.

In terms of biological role, component of the cytosolic Fe/S protein assembly machinery. Required for maturation of extramitochondrial Fe/S proteins. May play a role in the transfer of pre-assembled Fe/S clusters to target apoproteins. The sequence is that of Cytosolic Fe-S cluster assembly factor NAR1 (NAR1) from Yarrowia lipolytica (strain CLIB 122 / E 150) (Yeast).